The primary structure comprises 555 residues: Beta-hexosaminidase A (555 aa).

Positions 1-18 are cleaved as a signal peptide; it reads MRLLIPILIFALITTAVT. The N-linked (GlcNAc...) asparagine glycan is linked to N47. The active-site Proton donor is E325. N-linked (GlcNAc...) asparagine glycosylation is found at N351, N412, and N460.

It belongs to the glycosyl hydrolase 20 family. As to expression, expressed in coelomocytes and neurons of the pharyngeal region and nerve cord.

It is found in the lysosome. The enzyme catalyses Hydrolysis of terminal non-reducing N-acetyl-D-hexosamine residues in N-acetyl-beta-D-hexosaminides.. Functionally, responsible for the degradation of GM2 gangliosides, and a variety of other molecules containing terminal N-acetyl hexosamines. Degrades chitotriose. The polypeptide is Beta-hexosaminidase A (hex-1) (Caenorhabditis elegans).